We begin with the raw amino-acid sequence, 94 residues long: Integration host factor subunit beta (94 aa).

The protein belongs to the bacterial histone-like protein family. In terms of assembly, heterodimer of an alpha and a beta chain.

This protein is one of the two subunits of integration host factor, a specific DNA-binding protein that functions in genetic recombination as well as in transcriptional and translational control. The sequence is that of Integration host factor subunit beta (ihfB) from Dickeya dadantii (strain 3937) (Erwinia chrysanthemi (strain 3937)).